Reading from the N-terminus, the 185-residue chain is Capsid protein (185 aa).

Residues 136 to 185 (NAPILSTLPETTVVRRRDRGRSPRRRTPSPRRRRSQSPRRRRSQSRESQC) are disordered. A compositionally biased stretch (basic residues) spans 149–178 (VRRRDRGRSPRRRTPSPRRRRSQSPRRRRS). Phosphoserine; by host occurs at positions 157, 164, and 172. The stretch at 157-163 (SPRRRTP) is one 1; half-length repeat. Residues 157 to 179 (SPRRRTPSPRRRRSQSPRRRRSQ) are 3 X 8 AA repeats of S-P-R-R-R-[PR]-S-Q. Positions 160-177 (RRTPSPRRRRSQSPRRRR) match the Bipartite nuclear localization signal motif. 2 consecutive repeat copies span residues 164–171 (SPRRRRSQ) and 172–179 (SPRRRRSQ). Residues 179 to 185 (QSRESQC) form an RNA binding region.

This sequence belongs to the orthohepadnavirus core antigen family. Homodimerizes, then multimerizes. Interacts with cytosol exposed regions of viral L glycoprotein present in the reticulum-to-Golgi compartment. Interacts with human FLNB. Phosphorylated form interacts with host importin alpha; this interaction depends on the exposure of the NLS, which itself depends upon genome maturation and/or phosphorylation of the capsid protein. Interacts with host NUP153. In terms of processing, phosphorylated by host SRPK1, SRPK2, and maybe protein kinase C or GAPDH. Phosphorylation is critical for pregenomic RNA packaging. Protein kinase C phosphorylation is stimulated by HBx protein and may play a role in transport of the viral genome to the nucleus at the late step during the viral replication cycle.

It is found in the virion. The protein resides in the host cytoplasm. Its function is as follows. Self assembles to form an icosahedral capsid. Most capsids appear to be large particles with an icosahedral symmetry of T=4 and consist of 240 copies of capsid protein, though a fraction forms smaller T=3 particles consisting of 180 capsid proteins. Entering capsids are transported along microtubules to the nucleus. Phosphorylation of the capsid is thought to induce exposure of nuclear localization signal in the C-terminal portion of the capsid protein that allows binding to the nuclear pore complex via the importin (karyopherin-) alpha and beta. Capsids are imported in intact form through the nuclear pore into the nuclear basket, where it probably binds NUP153. Only capsids that contain the mature viral genome can release the viral DNA and capsid protein into the nucleoplasm. Immature capsids get stuck in the basket. Capsids encapsulate the pre-genomic RNA and the P protein. Pre-genomic RNA is reverse-transcribed into DNA while the capsid is still in the cytoplasm. The capsid can then either be directed to the nucleus, providing more genomes for transcription, or bud through the endoplasmic reticulum to provide new virions. The polypeptide is Capsid protein (Homo sapiens (Human)).